A 90-amino-acid polypeptide reads, in one-letter code: UPF0223 protein LMHCC_1569 (90 aa).

Belongs to the UPF0223 family.

In Listeria monocytogenes serotype 4a (strain HCC23), this protein is UPF0223 protein LMHCC_1569.